The sequence spans 451 residues: uncharacterized protein (451 aa).

Residues 1–59 (MLHKNDIIETEISDISHEGMGIAKVDGFVFFVENALPGEIIKMRVLKLRKRIGYGKVEE) enclose the TRAM domain. S-adenosyl-L-methionine is bound by residues glutamine 283, tyrosine 312, glutamate 333, and aspartate 381. Residue cysteine 408 is the Nucleophile of the active site.

This sequence belongs to the class I-like SAM-binding methyltransferase superfamily. RNA M5U methyltransferase family.

This is an uncharacterized protein from Streptococcus agalactiae serotype V (strain ATCC BAA-611 / 2603 V/R).